Here is a 447-residue protein sequence, read N- to C-terminus: Exodeoxyribonuclease 7 large subunit (447 aa).

It belongs to the XseA family. As to quaternary structure, heterooligomer composed of large and small subunits.

The protein localises to the cytoplasm. It carries out the reaction Exonucleolytic cleavage in either 5'- to 3'- or 3'- to 5'-direction to yield nucleoside 5'-phosphates.. In terms of biological role, bidirectionally degrades single-stranded DNA into large acid-insoluble oligonucleotides, which are then degraded further into small acid-soluble oligonucleotides. The sequence is that of Exodeoxyribonuclease 7 large subunit from Lactiplantibacillus plantarum (strain ATCC BAA-793 / NCIMB 8826 / WCFS1) (Lactobacillus plantarum).